A 105-amino-acid polypeptide reads, in one-letter code: MAVAGSWQPPRPCEVYRAEWELCRSVGHVLHHYYVHGKRPDCRQWLRDLTNCREWEESRSAEAQRSLCESEQVRVQAAQKHTLVWALRQRPPTDWNLPLPQEKDK.

This sequence belongs to the UPF0545 family. As to quaternary structure, interacts with RTN4 isoform A/Nogo-A; the interaction results in enhanced RTN4-mediated inhibition of AMPA receptor clustering. Also interacts with NCAM1, RANBP2 and CCT8. Rapidly degraded by proteolysis following neuronal stimulation, resulting in increased AMPA receptor clustering. In the postnatal brain, expressed diffusely throughout the hippocampus at a low level at 8 weeks (at protein level). At 16 weeks, strongly expressed in the stratum lucidum of the hippocampus (at protein level). In developing and aging brain, expression is strongest in hippocampus, especially in areas CA3 and CA2, throughout the dorsoventral axis.

The protein resides in the synapse. It localises to the synaptic cleft. Functionally, negatively regulates long-term potentiation and modulates adult synaptic plasticity. Stabilizes the interaction of RTN4 isoform A/Nogo-A with its receptors, inhibiting clustering of postsynaptic AMPA receptors at synaptic sites. Upon neuronal stimulation, degraded at synapses, reducing RTN4 signaling and allowing AMPA receptor clustering at individual synapses. The chain is Synaptic plasticity regulator PANTS from Mus musculus (Mouse).